The following is a 470-amino-acid chain: 6-phospho-beta-galactosidase (470 aa).

Residues glutamine 19, histidine 116, asparagine 159, glutamate 160, and asparagine 297 each contribute to the D-galactose 6-phosphate site. Glutamate 160 serves as the catalytic Proton donor. Catalysis depends on glutamate 375, which acts as the Nucleophile. D-galactose 6-phosphate contacts are provided by serine 430, tryptophan 431, lysine 437, and tyrosine 439.

It belongs to the glycosyl hydrolase 1 family.

It catalyses the reaction a 6-phospho-beta-D-galactoside + H2O = D-galactose 6-phosphate + an alcohol. It participates in carbohydrate metabolism; lactose degradation; D-galactose 6-phosphate and beta-D-glucose from lactose 6-phosphate: step 1/1. The sequence is that of 6-phospho-beta-galactosidase from Staphylococcus epidermidis (strain ATCC 35984 / DSM 28319 / BCRC 17069 / CCUG 31568 / BM 3577 / RP62A).